Here is a 150-residue protein sequence, read N- to C-terminus: Arginine repressor (150 aa).

This sequence belongs to the ArgR family.

The protein localises to the cytoplasm. The protein operates within amino-acid biosynthesis; L-arginine biosynthesis [regulation]. Its function is as follows. Regulates arginine biosynthesis genes. The polypeptide is Arginine repressor (Clostridium botulinum (strain Okra / Type B1)).